The chain runs to 91 residues: Small ribosomal subunit protein uS19 (91 aa).

The protein belongs to the universal ribosomal protein uS19 family.

Its function is as follows. Protein S19 forms a complex with S13 that binds strongly to the 16S ribosomal RNA. The chain is Small ribosomal subunit protein uS19 from Verminephrobacter eiseniae (strain EF01-2).